The chain runs to 114 residues: Iron-sulfur cluster insertion protein ErpA (114 aa).

The iron-sulfur cluster site is built by cysteine 42, cysteine 106, and cysteine 108.

It belongs to the HesB/IscA family. In terms of assembly, homodimer. Requires iron-sulfur cluster as cofactor.

Its function is as follows. Required for insertion of 4Fe-4S clusters for at least IspG. The sequence is that of Iron-sulfur cluster insertion protein ErpA from Cronobacter sakazakii (strain ATCC BAA-894) (Enterobacter sakazakii).